The primary structure comprises 559 residues: uncharacterized protein (559 aa).

The next 11 membrane-spanning stretches (helical) occupy residues 103–123 (LAAL…NGLF), 139–159 (FGYY…LFYY), 192–212 (AGIT…SFPF), 223–243 (FFLI…IFLL), 263–283 (WSWV…TLAV), 302–322 (MLIL…SGVA), 348–368 (AAAF…NISD), 387–407 (IRRA…PWKI), 413–434 (AFLA…IFVA), 466–486 (ALIA…MSIN), and 501–521 (IGYF…NLVF).

The protein belongs to the purine-cytosine permease (2.A.39) family.

The protein localises to the golgi apparatus membrane. This is an uncharacterized protein from Schizosaccharomyces pombe (strain 972 / ATCC 24843) (Fission yeast).